The primary structure comprises 153 residues: Large ribosomal subunit protein bL9 (153 aa).

This sequence belongs to the bacterial ribosomal protein bL9 family.

In terms of biological role, binds to the 23S rRNA. The protein is Large ribosomal subunit protein bL9 of Blochmanniella pennsylvanica (strain BPEN).